The chain runs to 57 residues: MKISFLLLALVICSIGWSEAQFTDVKCTGSKQCWPVCKQMFGKPNGKCMNGKCRCYS.

A signal peptide spans 1–20 (MKISFLLLALVICSIGWSEA). The residue at position 21 (Gln-21) is a Pyrrolidone carboxylic acid. Disulfide bonds link Cys-27-Cys-48, Cys-33-Cys-53, and Cys-37-Cys-55.

It belongs to the short scorpion toxin superfamily. Potassium channel inhibitor family. Alpha-KTx 01 subfamily. Expressed by the venom gland.

It localises to the secreted. Functionally, potent blocker of both large-conductance calcium-activated potassium channels (KCa1.1/KCNMA1) and voltage-gated potassium channels (Kv1.3/KCNA3). Has also been shown to moderately inhibit Kv1.2/KCNA2 and weakly inhibit Kv1.1/KCNA1 channels, as well as 5-hydroxytryptamine 3 receptors (HTR3A). The protein is Potassium channel toxin alpha-KTx 1.5 of Olivierus martensii (Manchurian scorpion).